A 215-amino-acid polypeptide reads, in one-letter code: UPF0502 protein YceH (215 aa).

Position 80 is an N6-acetyllysine (lysine 80).

This sequence belongs to the UPF0502 family.

The protein is UPF0502 protein YceH of Escherichia coli O157:H7.